The primary structure comprises 217 residues: tRNA (guanine-N(7)-)-methyltransferase (217 aa).

Positions 44, 69, 96, and 118 each coordinate S-adenosyl-L-methionine. The active site involves Asp118. Lys122 is a binding site for substrate. Residues 124 to 129 (RHEKRR) are interaction with RNA. Residues Asp154 and 193–196 (TEYE) contribute to the substrate site.

Belongs to the class I-like SAM-binding methyltransferase superfamily. TrmB family.

The catalysed reaction is guanosine(46) in tRNA + S-adenosyl-L-methionine = N(7)-methylguanosine(46) in tRNA + S-adenosyl-L-homocysteine. The protein operates within tRNA modification; N(7)-methylguanine-tRNA biosynthesis. In terms of biological role, catalyzes the formation of N(7)-methylguanine at position 46 (m7G46) in tRNA. The polypeptide is tRNA (guanine-N(7)-)-methyltransferase (Lactococcus lactis subsp. lactis (strain IL1403) (Streptococcus lactis)).